We begin with the raw amino-acid sequence, 136 residues long: Transcription antitermination protein NusB (136 aa).

It belongs to the NusB family.

Functionally, involved in transcription antitermination. Required for transcription of ribosomal RNA (rRNA) genes. Binds specifically to the boxA antiterminator sequence of the ribosomal RNA (rrn) operons. In Arthrobacter sp. (strain FB24), this protein is Transcription antitermination protein NusB.